A 397-amino-acid polypeptide reads, in one-letter code: Tyrosine aminotransferase (397 aa).

The substrate site is built by Gly-34, Tyr-66, Trp-131, and Asn-184. N6-(pyridoxal phosphate)lysine is present on Lys-247. Arg-375 lines the substrate pocket.

It belongs to the class-I pyridoxal-phosphate-dependent aminotransferase family. Homodimer. Requires pyridoxal 5'-phosphate as cofactor.

The enzyme catalyses L-tyrosine + 2-oxoglutarate = 3-(4-hydroxyphenyl)pyruvate + L-glutamate. The catalysed reaction is 4-methylsulfanyl-2-oxobutanoate + L-tyrosine = 3-(4-hydroxyphenyl)pyruvate + L-methionine. It catalyses the reaction an aromatic L-alpha-amino acid + 2-oxoglutarate = an aromatic oxo-acid + L-glutamate. It carries out the reaction L-aspartate + 2-oxoglutarate = oxaloacetate + L-glutamate. Its pathway is amino-acid biosynthesis; L-methionine biosynthesis via salvage pathway; L-methionine from S-methyl-5-thio-alpha-D-ribose 1-phosphate: step 6/6. With respect to regulation, inhibited by malate and nitrotyrosine by approximately 20% at the higher concentration. At 100 uM, canaline and carboxymethoxylamine inhibit aminotransferase activity by 35 and 70%, respectively. Addition of 1.0 mM carboxymethoxylamine lead to a complete inhibition of the aminotransferase activity. Its function is as follows. catalyzes the formation of methionine from 2-keto-4-methylthiobutyrate (KMTB) primarily using aromatic amino acids (tyrosine, phenylalanine and tryptophan) or glutamate as the amino donors. Histidine, leucine, asparagine, or arginine are also functional amino donors but to a lesser extent. Can also use alpha-ketoglutarate, oxaloacetate and pyruvate as the amino acceptors. The sequence is that of Tyrosine aminotransferase (tyrB) from Klebsiella pneumoniae.